Here is a 307-residue protein sequence, read N- to C-terminus: Small ribosomal subunit biogenesis GTPase RsgA (307 aa).

A CP-type G domain is found at 82-240; the sequence is GRYGERIVVA…IADTPGLREV (159 aa). GTP contacts are provided by residues 131–134 and 182–190; these read NKAD and GPSGVGKSS. Zn(2+) is bound by residues Cys264, Cys269, His271, and Cys277.

This sequence belongs to the TRAFAC class YlqF/YawG GTPase family. RsgA subfamily. In terms of assembly, monomer. Associates with 30S ribosomal subunit, binds 16S rRNA. Zn(2+) is required as a cofactor.

It localises to the cytoplasm. Functionally, one of several proteins that assist in the late maturation steps of the functional core of the 30S ribosomal subunit. Helps release RbfA from mature subunits. May play a role in the assembly of ribosomal proteins into the subunit. Circularly permuted GTPase that catalyzes slow GTP hydrolysis, GTPase activity is stimulated by the 30S ribosomal subunit. The protein is Small ribosomal subunit biogenesis GTPase RsgA of Gemmatimonas aurantiaca (strain DSM 14586 / JCM 11422 / NBRC 100505 / T-27).